The chain runs to 169 residues: Capsid protein (169 aa).

It belongs to the nanoviridae capsid protein family.

It is found in the virion. The protein is Capsid protein (DNA-S) of Subterranean clover stunt virus (strain F) (SCSV).